The primary structure comprises 578 residues: Proline--tRNA ligase (578 aa).

This sequence belongs to the class-II aminoacyl-tRNA synthetase family. ProS type 1 subfamily. In terms of assembly, homodimer.

It localises to the cytoplasm. The enzyme catalyses tRNA(Pro) + L-proline + ATP = L-prolyl-tRNA(Pro) + AMP + diphosphate. Functionally, catalyzes the attachment of proline to tRNA(Pro) in a two-step reaction: proline is first activated by ATP to form Pro-AMP and then transferred to the acceptor end of tRNA(Pro). As ProRS can inadvertently accommodate and process non-cognate amino acids such as alanine and cysteine, to avoid such errors it has two additional distinct editing activities against alanine. One activity is designated as 'pretransfer' editing and involves the tRNA(Pro)-independent hydrolysis of activated Ala-AMP. The other activity is designated 'posttransfer' editing and involves deacylation of mischarged Ala-tRNA(Pro). The misacylated Cys-tRNA(Pro) is not edited by ProRS. In Burkholderia pseudomallei (strain 668), this protein is Proline--tRNA ligase.